A 165-amino-acid polypeptide reads, in one-letter code: Ribosome maturation factor RimM (165 aa).

In terms of domain architecture, PRC barrel spans 94-165; that stretch reads EDEFYIADLN…YVILNYQTKV (72 aa).

This sequence belongs to the RimM family. In terms of assembly, binds ribosomal protein uS19.

The protein resides in the cytoplasm. In terms of biological role, an accessory protein needed during the final step in the assembly of 30S ribosomal subunit, possibly for assembly of the head region. Essential for efficient processing of 16S rRNA. May be needed both before and after RbfA during the maturation of 16S rRNA. It has affinity for free ribosomal 30S subunits but not for 70S ribosomes. This is Ribosome maturation factor RimM from Rickettsia typhi (strain ATCC VR-144 / Wilmington).